The sequence spans 24 residues: Humanin-like 13 (24 aa).

Belongs to the humanin family.

The protein localises to the secreted. It localises to the cytoplasm. Functionally, plays a role as a neuroprotective and antiapoptotic factor. The protein is Humanin-like 13 of Homo sapiens (Human).